Here is a 543-residue protein sequence, read N- to C-terminus: Alanine aminotransferase 1, mitochondrial (543 aa).

The N-terminal 55 residues, 1–55 (MRRFVIGQAKNLIDQSRRRQLHHHKNLSFVSLIPPFSAPSDSSSRHLSSSSSSDM), are a transit peptide targeting the mitochondrion. The segment covering 43–63 (SSRHLSSSSSSDMSASDSSSS) has biased composition (low complexity). A disordered region spans residues 43–64 (SSRHLSSSSSSDMSASDSSSSL). N-acetylserine is present on S56. Pyridoxal 5'-phosphate-binding positions include Y173, 209–210 (AS), Y235, N291, Y322, and 354–356 (SFQ). K360 carries the N6-(pyridoxal phosphate)lysine modification. The pyridoxal 5'-phosphate site is built by R369 and N397.

It belongs to the class-I pyridoxal-phosphate-dependent aminotransferase family. Alanine aminotransferase subfamily. Homodimer. It depends on pyridoxal 5'-phosphate as a cofactor. Post-translationally, the N-terminus is blocked. In terms of tissue distribution, mostly expressed in roots and shoots, mostly in vascular tissues, and, to a lower extent, in flowers and leaves.

Its subcellular location is the mitochondrion. It catalyses the reaction L-alanine + 2-oxoglutarate = pyruvate + L-glutamate. The protein operates within photosynthesis; C4 acid pathway. Its pathway is amino-acid degradation; L-alanine degradation via transaminase pathway; pyruvate from L-alanine: step 1/1. Its function is as follows. Is the major alanine aminotransferase in roots that catalyzes the conversion of alanine to pyruvate. Involved in the rapid conversion of alanine to pyruvate during recovery from low-oxygen stress. The polypeptide is Alanine aminotransferase 1, mitochondrial (Arabidopsis thaliana (Mouse-ear cress)).